The following is a 431-amino-acid chain: 3-phosphoshikimate 1-carboxyvinyltransferase (431 aa).

The 3-phosphoshikimate site is built by Lys-21, Ser-22, and Arg-26. Lys-21 is a binding site for phosphoenolpyruvate. 2 residues coordinate phosphoenolpyruvate: Gly-94 and Arg-122. 4 residues coordinate 3-phosphoshikimate: Ser-167, Gln-169, Asp-315, and Lys-342. Gln-169 is a phosphoenolpyruvate binding site. Residue Asp-315 is the Proton acceptor of the active site. The phosphoenolpyruvate site is built by Arg-346 and Arg-388.

The protein belongs to the EPSP synthase family. As to quaternary structure, monomer.

It is found in the cytoplasm. The enzyme catalyses 3-phosphoshikimate + phosphoenolpyruvate = 5-O-(1-carboxyvinyl)-3-phosphoshikimate + phosphate. The protein operates within metabolic intermediate biosynthesis; chorismate biosynthesis; chorismate from D-erythrose 4-phosphate and phosphoenolpyruvate: step 6/7. In terms of biological role, catalyzes the transfer of the enolpyruvyl moiety of phosphoenolpyruvate (PEP) to the 5-hydroxyl of shikimate-3-phosphate (S3P) to produce enolpyruvyl shikimate-3-phosphate and inorganic phosphate. The polypeptide is 3-phosphoshikimate 1-carboxyvinyltransferase (Pelotomaculum thermopropionicum (strain DSM 13744 / JCM 10971 / SI)).